The primary structure comprises 111 residues: Phosphoribosyl-ATP pyrophosphatase (111 aa).

It belongs to the PRA-PH family.

It is found in the cytoplasm. It catalyses the reaction 1-(5-phospho-beta-D-ribosyl)-ATP + H2O = 1-(5-phospho-beta-D-ribosyl)-5'-AMP + diphosphate + H(+). It participates in amino-acid biosynthesis; L-histidine biosynthesis; L-histidine from 5-phospho-alpha-D-ribose 1-diphosphate: step 2/9. This Pseudomonas entomophila (strain L48) protein is Phosphoribosyl-ATP pyrophosphatase.